A 102-amino-acid chain; its full sequence is MSALSTQERLLQVILAPQITEKATRVADKYQQIAFRVRTDATKPEIKAAVELVFKVEVDSVTVVNVGGKVKRAGRTFGRRKDWKKAYVSLKPGQEINFAAGE.

Belongs to the universal ribosomal protein uL23 family. In terms of assembly, part of the 50S ribosomal subunit. Contacts protein L29, and trigger factor when it is bound to the ribosome.

In terms of biological role, one of the early assembly proteins it binds 23S rRNA. One of the proteins that surrounds the polypeptide exit tunnel on the outside of the ribosome. Forms the main docking site for trigger factor binding to the ribosome. This is Large ribosomal subunit protein uL23 from Methylobacillus flagellatus (strain ATCC 51484 / DSM 6875 / VKM B-1610 / KT).